The following is a 275-amino-acid chain: Transmembrane protein 45A (275 aa).

The next 5 membrane-spanning stretches (helical) occupy residues 7-27 (HALP…KSIL), 51-71 (ILEG…EQFI), 100-120 (FFFG…SLPV), 150-170 (IFVH…AFLE), and 218-238 (ILFL…IVGM).

Belongs to the TMEM45 family.

It is found in the membrane. The protein is Transmembrane protein 45A (TMEM45A) of Homo sapiens (Human).